A 264-amino-acid chain; its full sequence is Thymidylate synthase (264 aa).

Residue Arg-21 participates in dUMP binding. (6R)-5,10-methylene-5,6,7,8-tetrahydrofolate is bound at residue His-51. 126–127 (RR) contributes to the dUMP binding site. The active-site Nucleophile is Cys-146. DUMP-binding positions include 166 to 169 (RSVD), Asn-177, and 207 to 209 (HLY). Asp-169 lines the (6R)-5,10-methylene-5,6,7,8-tetrahydrofolate pocket. A (6R)-5,10-methylene-5,6,7,8-tetrahydrofolate-binding site is contributed by Ala-263.

The protein belongs to the thymidylate synthase family. Bacterial-type ThyA subfamily. Homodimer.

It is found in the cytoplasm. It catalyses the reaction dUMP + (6R)-5,10-methylene-5,6,7,8-tetrahydrofolate = 7,8-dihydrofolate + dTMP. Its pathway is pyrimidine metabolism; dTTP biosynthesis. Catalyzes the reductive methylation of 2'-deoxyuridine-5'-monophosphate (dUMP) to 2'-deoxythymidine-5'-monophosphate (dTMP) while utilizing 5,10-methylenetetrahydrofolate (mTHF) as the methyl donor and reductant in the reaction, yielding dihydrofolate (DHF) as a by-product. This enzymatic reaction provides an intracellular de novo source of dTMP, an essential precursor for DNA biosynthesis. The polypeptide is Thymidylate synthase (Geobacillus kaustophilus (strain HTA426)).